The following is a 127-amino-acid chain: Biogenesis of lysosome-related organelles complex 1 subunit 2 (127 aa).

Belongs to the BLOC1S2 family. Component of the biogenesis of lysosome-related organelles complex-1 (BLOC-1). Interacts with BLOS1 and SNX1.

It is found in the cytoplasm. Its subcellular location is the endosome. Its function is as follows. Component of the biogenesis of lysosome-related organelles complex-1 (BLOC-1), a complex that mediates the vacuolar degradative transport via the intracellular vesicle trafficking from the endosome to the vacuole. The sequence is that of Biogenesis of lysosome-related organelles complex 1 subunit 2 (BLOS2) from Arabidopsis thaliana (Mouse-ear cress).